The chain runs to 376 residues: Histidinol-phosphate aminotransferase (376 aa).

At Lys-230 the chain carries N6-(pyridoxal phosphate)lysine.

This sequence belongs to the class-II pyridoxal-phosphate-dependent aminotransferase family. Histidinol-phosphate aminotransferase subfamily. Homodimer. Requires pyridoxal 5'-phosphate as cofactor.

It carries out the reaction L-histidinol phosphate + 2-oxoglutarate = 3-(imidazol-4-yl)-2-oxopropyl phosphate + L-glutamate. The protein operates within amino-acid biosynthesis; L-histidine biosynthesis; L-histidine from 5-phospho-alpha-D-ribose 1-diphosphate: step 7/9. The sequence is that of Histidinol-phosphate aminotransferase from Trichodesmium erythraeum (strain IMS101).